The primary structure comprises 354 residues: Homeobox protein Nkx-2.4 (354 aa).

A DNA-binding region (homeobox) is located at residues 189 to 248; it reads RRKRRVLFSQAQVYELERRFKQQKYLSAPEREHLASMIHLTPTQVKIWFQNHRYKMKRQA. The interval 246–329 is disordered; it reads RQAKDKAAQQ…PALHGPGGGL (84 aa). Positions 263-272 are enriched in pro residues; sequence GPPPPPPPSP.

Belongs to the NK-2 homeobox family.

The protein resides in the nucleus. Functionally, probable transcription factor. In Homo sapiens (Human), this protein is Homeobox protein Nkx-2.4 (NKX2-4).